Here is a 161-residue protein sequence, read N- to C-terminus: Cytochrome c-type biogenesis protein CcmE (161 aa).

Over 1–8 (MNPRRKKR) the chain is Cytoplasmic. Residues 9 to 29 (LTLAVALIAGVAAVASLLLYA) form a helical; Signal-anchor for type II membrane protein membrane-spanning segment. At 30–161 (LNSNLNLFYT…TYNQKALEDK (132 aa)) the chain is on the periplasmic side. The heme site is built by H131 and Y135. The segment at 142–161 (EAMGQTHEKPTYNQKALEDK) is disordered. Residues 147 to 161 (THEKPTYNQKALEDK) show a composition bias toward basic and acidic residues.

Belongs to the CcmE/CycJ family.

It is found in the cell inner membrane. Its function is as follows. Heme chaperone required for the biogenesis of c-type cytochromes. Transiently binds heme delivered by CcmC and transfers the heme to apo-cytochromes in a process facilitated by CcmF and CcmH. In Shewanella frigidimarina (strain NCIMB 400), this protein is Cytochrome c-type biogenesis protein CcmE.